The sequence spans 191 residues: Ribosome maturation factor RimM (191 aa).

Positions 114–191 (EDEYYWVDLI…RIVVDWQPDY (78 aa)) constitute a PRC barrel domain.

It belongs to the RimM family. In terms of assembly, binds ribosomal protein uS19.

It is found in the cytoplasm. In terms of biological role, an accessory protein needed during the final step in the assembly of 30S ribosomal subunit, possibly for assembly of the head region. Essential for efficient processing of 16S rRNA. May be needed both before and after RbfA during the maturation of 16S rRNA. It has affinity for free ribosomal 30S subunits but not for 70S ribosomes. In Paracidovorax citrulli (strain AAC00-1) (Acidovorax citrulli), this protein is Ribosome maturation factor RimM.